We begin with the raw amino-acid sequence, 81 residues long: Cytotoxin I-like T-15 (81 aa).

An N-terminal signal peptide occupies residues 1 to 21 (MKTLLLTLVVVTIVCLDLGYT). Disulfide bonds link Cys24–Cys42, Cys35–Cys59, Cys63–Cys74, and Cys75–Cys80.

It belongs to the three-finger toxin family. Short-chain subfamily. Type IA cytotoxin sub-subfamily. Monomer in solution; Homodimer and oligomer in the presence of negatively charged lipids forming a pore with a size ranging between 20 and 30 Angstroms. As to expression, expressed by the venom gland.

The protein resides in the secreted. Its subcellular location is the target cell membrane. Shows cytolytic activity on many different cells by forming pore in lipid membranes. In vivo, increases heart rate or kills the animal by cardiac arrest. In addition, it binds to heparin with high affinity, interacts with Kv channel-interacting protein 1 (KCNIP1) in a calcium-independent manner, and binds to integrin alpha-V/beta-3 (ITGAV/ITGB3) with moderate affinity. This chain is Cytotoxin I-like T-15, found in Naja atra (Chinese cobra).